We begin with the raw amino-acid sequence, 124 residues long: Protein TraJ (124 aa).

It is found in the cytoplasm. Its function is as follows. This protein is essential for positively regulating the expression of transfer genes that are involved in the conjugal transfer of DNA between bacterial cells. The chain is Protein TraJ (traJ) from Escherichia coli.